The following is a 210-amino-acid chain: NADH dehydrogenase [ubiquinone] iron-sulfur protein 8, mitochondrial (210 aa).

The transit peptide at 1–34 directs the protein to the mitochondrion; sequence MRCLTTPVLLRALAQAARAGPPGGRSLHSSAVAA. 4Fe-4S ferredoxin-type domains lie at 102-131 and 141-170; these read RRYP…IEAE and TRYD…EGPN. [4Fe-4S] cluster contacts are provided by Cys-111, Cys-114, Cys-117, Cys-121, Cys-150, Cys-153, Cys-156, and Cys-160.

The protein belongs to the complex I 23 kDa subunit family. Core subunit of respiratory chain NADH dehydrogenase (Complex I) which is composed of 45 different subunits. This is a component of the iron-sulfur (IP) fragment of the enzyme. Interacts with RAB5IF. It depends on [4Fe-4S] cluster as a cofactor.

Its subcellular location is the mitochondrion inner membrane. It carries out the reaction a ubiquinone + NADH + 5 H(+)(in) = a ubiquinol + NAD(+) + 4 H(+)(out). In terms of biological role, core subunit of the mitochondrial membrane respiratory chain NADH dehydrogenase (Complex I) which catalyzes electron transfer from NADH through the respiratory chain, using ubiquinone as an electron acceptor. Essential for the catalytic activity and assembly of complex I. The chain is NADH dehydrogenase [ubiquinone] iron-sulfur protein 8, mitochondrial (NDUFS8) from Gorilla gorilla gorilla (Western lowland gorilla).